The sequence spans 1184 residues: Fibulin-2 (1184 aa).

Residues 1 to 27 (MVLLWEPAGAWLALGLALALGPSVAAA) form the signal peptide. Residues 28–177 (APRQDCTGVE…ELICYQLPGC (150 aa)) form a subdomain NA (Cys-rich) region. Residues 28-444 (APRQDCTGVE…EGSTKDLIET (417 aa)) form a n region. Residues 178–444 (HGNFSDAEEG…EGSTKDLIET (267 aa)) are subdomain NB (Cys-free). N-linked (GlcNAc...) asparagine glycosylation occurs at Asn-180. Disordered regions lie at residues 221 to 293 (VQAG…MAVT) and 399 to 437 (IPPT…PEGS). Residues 224-236 (GAGGPPAALGGGS) are compositionally biased toward gly residues. The span at 252-261 (PRPTAAAALG) shows a compositional bias: low complexity. The span at 276-288 (DSEEEEEEEEERE) shows a compositional bias: acidic residues. Position 277 is a phosphoserine (Ser-277). Polar residues predominate over residues 423-436 (PNSVHSIPRSSPEG). Cystine bridges form between Cys-445–Cys-472, Cys-446–Cys-479, Cys-459–Cys-480, Cys-489–Cys-518, Cys-502–Cys-519, Cys-521–Cys-545, Cys-522–Cys-552, Cys-535–Cys-553, Cys-608–Cys-620, Cys-616–Cys-629, Cys-631–Cys-644, Cys-683–Cys-693, Cys-689–Cys-702, Cys-704–Cys-717, Cys-723–Cys-736, Cys-730–Cys-745, Cys-751–Cys-762, Cys-768–Cys-781, Cys-775–Cys-790, Cys-796–Cys-808, Cys-814–Cys-827, Cys-821–Cys-836, Cys-843–Cys-856, Cys-862–Cys-875, Cys-869–Cys-884, Cys-886–Cys-899, Cys-905–Cys-917, Cys-913–Cys-926, Cys-928–Cys-941, Cys-947–Cys-956, Cys-952–Cys-965, Cys-967–Cys-980, Cys-986–Cys-998, Cys-994–Cys-1007, Cys-1009–Cys-1023, Cys-1029–Cys-1042, Cys-1036–Cys-1051, and Cys-1056–Cys-1068. Anaphylatoxin-like domains follow at residues 445 to 480 (CCAA…RHCC), 488 to 519 (SCMA…KQCC), and 521 to 553 (CCGL…LSCC). An N-linked (GlcNAc...) asparagine glycan is attached at Asn-507. In terms of domain architecture, EGF-like 1; calcium-binding spans 604 to 645 (DQDECLLLPGELCQHLCINTVGSYHCACFPGFSLQDDGRTCR). The EGF-like 2 domain occupies 679–718 (QPNTCKDNGPCKQVCSTVGGSAICSCFPGYAIMADGVSCE). The 45-residue stretch at 719-763 (DINECVTDLHTCSRGEHCVNTLGSFHCYKALTCEPGYALKDGECE) folds into the EGF-like 3; calcium-binding domain. Residues 764-809 (DVDECAMGTHTCQPGFLCQNTKGSFYCQARQRCMDGFLQDPEGNCV) form the EGF-like 4; calcium-binding domain. One can recognise an EGF-like 5; calcium-binding domain in the interval 810-857 (DINECTSLSEPCRPGFSCINTVGSYTCQRNPLICARGYHASDDGTKCV). Positions 858–900 (DVNECETGVHRCGEGQVCHNLPGSYRCDCKAGFQRDAFGRGCI) constitute an EGF-like 6; calcium-binding domain. Residues 901–942 (DVNECWASPGRLCQHTCENTLGSYRCSCASGFLLAADGKRCE) form the EGF-like 7; calcium-binding domain. In terms of domain architecture, EGF-like 8; calcium-binding spans 943–981 (DVNECEAQRCSQECANIYGSYQCYCRQGYQLAEDGHTCT). In terms of domain architecture, EGF-like 9; calcium-binding spans 982–1024 (DIDECAQGAGILCTFRCLNVPGSYQCACPEQGYTMTANGRSCK). Positions 1025–1069 (DVDECALGTHNCSEAETCHNIQGSFRCLRFECPPNYVQVSKTKCE) constitute an EGF-like 10; calcium-binding domain. Asn-1035 carries N-linked (GlcNAc...) asparagine glycosylation. The segment at 1070-1184 (RTTCHDFLEC…MHIFFTTFAL (115 aa)) is domain III.

The protein belongs to the fibulin family. In terms of assembly, homotrimer; disulfide-linked. Interacts with LAMA2. Interacts with FBN1 (via N-terminal domain). Forms a ternary complex with ELN and FBN1. O-glycosylated with core 1 or possibly core 8 glycans. It is unsure if the O-glycosylation is on Thr-347 or Ser-348. In terms of tissue distribution, component of both basement membranes and other connective tissues. Expressed in heart, placenta and ovary.

It localises to the secreted. The protein localises to the extracellular space. Its subcellular location is the extracellular matrix. Its binding to fibronectin and some other ligands is calcium dependent. May act as an adapter that mediates the interaction between FBN1 and ELN. This chain is Fibulin-2 (FBLN2), found in Homo sapiens (Human).